Consider the following 372-residue polypeptide: MFDFQINAHCSHTRARVGCFRTPHGSVNTPRFMPVGTLATVKGITATQLADTGAQMVLANTYHLHLQPGEGIVADAGGLHRFMGWDRPLLTDSGGFQIFSLADLNRIDDHGVVFRNPRNGSQIELTPERAIEIQMALGADVAMAFDQCPPYPASESDVETACKRTHAWLERCSNTHQHANQALFGIVQGGCFPHLREQSAQIVASFGLPGIAIGGVSVGEPVEDIHRIVRQVSPLLPQDRPRYLMGIGTLREIAIAVASGIDLFDCVLPTRLGRHGTALVAGERWNLRNARFREDHTPLDQSCTCTACRHHSRAYLHHLIRNEELLGLTLLSLHNLTQLIRFTSAISQAIQDDCFSEDFAPWQPDSAAHHTW.

Aspartate 92 functions as the Proton acceptor in the catalytic mechanism. Residues 92–96 (DSGGF), aspartate 146, glutamine 188, and glycine 215 contribute to the substrate site. The RNA binding stretch occupies residues 246–252 (GIGTLRE). The Nucleophile role is filled by aspartate 265. The segment at 270–274 (TRLGR) is RNA binding; important for wobble base 34 recognition. Positions 303, 305, 308, and 334 each coordinate Zn(2+).

It belongs to the queuine tRNA-ribosyltransferase family. Homodimer. Within each dimer, one monomer is responsible for RNA recognition and catalysis, while the other monomer binds to the replacement base PreQ1. The cofactor is Zn(2+).

It catalyses the reaction 7-aminomethyl-7-carbaguanine + guanosine(34) in tRNA = 7-aminomethyl-7-carbaguanosine(34) in tRNA + guanine. It functions in the pathway tRNA modification; tRNA-queuosine biosynthesis. Its function is as follows. Catalyzes the base-exchange of a guanine (G) residue with the queuine precursor 7-aminomethyl-7-deazaguanine (PreQ1) at position 34 (anticodon wobble position) in tRNAs with GU(N) anticodons (tRNA-Asp, -Asn, -His and -Tyr). Catalysis occurs through a double-displacement mechanism. The nucleophile active site attacks the C1' of nucleotide 34 to detach the guanine base from the RNA, forming a covalent enzyme-RNA intermediate. The proton acceptor active site deprotonates the incoming PreQ1, allowing a nucleophilic attack on the C1' of the ribose to form the product. After dissociation, two additional enzymatic reactions on the tRNA convert PreQ1 to queuine (Q), resulting in the hypermodified nucleoside queuosine (7-(((4,5-cis-dihydroxy-2-cyclopenten-1-yl)amino)methyl)-7-deazaguanosine). This chain is Queuine tRNA-ribosyltransferase, found in Prochlorococcus marinus (strain MIT 9313).